Reading from the N-terminus, the 243-residue chain is Sugar fermentation stimulation protein homolog (243 aa).

Belongs to the SfsA family.

In Lacticaseibacillus casei (strain BL23) (Lactobacillus casei), this protein is Sugar fermentation stimulation protein homolog.